The sequence spans 406 residues: Exodeoxyribonuclease 7 large subunit (406 aa).

The protein belongs to the XseA family. As to quaternary structure, heterooligomer composed of large and small subunits.

It is found in the cytoplasm. It catalyses the reaction Exonucleolytic cleavage in either 5'- to 3'- or 3'- to 5'-direction to yield nucleoside 5'-phosphates.. Its function is as follows. Bidirectionally degrades single-stranded DNA into large acid-insoluble oligonucleotides, which are then degraded further into small acid-soluble oligonucleotides. This is Exodeoxyribonuclease 7 large subunit from Desulfitobacterium hafniense (strain Y51).